The following is a 253-amino-acid chain: Hydroxyacylglutathione hydrolase (253 aa).

Zn(2+)-binding residues include His54, His56, Asp58, His59, His112, Asp131, and His169.

Belongs to the metallo-beta-lactamase superfamily. Glyoxalase II family. Monomer. Zn(2+) serves as cofactor.

It carries out the reaction an S-(2-hydroxyacyl)glutathione + H2O = a 2-hydroxy carboxylate + glutathione + H(+). It participates in secondary metabolite metabolism; methylglyoxal degradation; (R)-lactate from methylglyoxal: step 2/2. In terms of biological role, thiolesterase that catalyzes the hydrolysis of S-D-lactoyl-glutathione to form glutathione and D-lactic acid. In Bartonella tribocorum (strain CIP 105476 / IBS 506), this protein is Hydroxyacylglutathione hydrolase.